A 317-amino-acid polypeptide reads, in one-letter code: Adenosine receptor A3 (317 aa).

Residues 1–14 (MPVNSTAVSWTSVT) are Extracellular-facing. N4 is a glycosylation site (N-linked (GlcNAc...) asparagine). Residues 15-37 (YITVEILIGLCAIVGNVLVIWVV) form a helical membrane-spanning segment. The Cytoplasmic portion of the chain corresponds to 38-48 (KLNPSLQTTTF). A helical membrane pass occupies residues 49-72 (YFIVSLALADIAVGVLVMPLAIVI). Residues 73 to 84 (SLGVTIHFYSCL) are Extracellular-facing. The cysteines at positions 83 and 165 are disulfide-linked. Residues 85-106 (FMTCLMLIFTHASIMSLLAIAV) traverse the membrane as a helical segment. At 107-126 (DRYLRVKLTVRYRRVTTQRR) the chain is on the cytoplasmic side. A helical membrane pass occupies residues 127 to 148 (IWLALGLCWLVSFLVGLTPMFG). The Extracellular segment spans residues 149–176 (WNMKLSSADENLTFLPCRFRSVMRMDYM). N-linked (GlcNAc...) asparagine glycosylation is present at N159. A helical transmembrane segment spans residues 177-197 (VYFSFFLWILVPLVVMCAIYF). Residues 198-230 (DIFYIIRNRLSQSFSGSRETGAFYGREFKTAKS) are Cytoplasmic-facing. A helical membrane pass occupies residues 231–254 (LLLVLFLFALCWLPLSIINCILYF). The Extracellular portion of the chain corresponds to 255-260 (DGQVPQ). Residues 261-283 (TVLYLGILLSHANSMMNPIVYAY) form a helical membrane-spanning segment. Topologically, residues 284–317 (KIKKFKETYLLILKACVMCQPSKSMDPSTEQTSE) are cytoplasmic. C302 carries the S-palmitoyl cysteine lipid modification.

The protein belongs to the G-protein coupled receptor 1 family. Post-translationally, phosphorylation on Thr-315 and Ser-316 may be crucial for rapid desensitization. Phosphorylation on Thr-315 may be necessary for phosphorylation on Ser-316 to occur. As to expression, most abundant in lung, spleen and pineal gland. Moderate expression in brain, kidney and testis.

The protein resides in the cell membrane. In terms of biological role, receptor for adenosine. The activity of this receptor is mediated by G proteins which inhibits adenylyl cyclase. In Ovis aries (Sheep), this protein is Adenosine receptor A3 (ADORA3).